A 523-amino-acid polypeptide reads, in one-letter code: Synaptotagmin-10 (523 aa).

Residues 1–55 (MSFRKEDGVSSLCQKALHIITELCFAGQVEWDKCSGIFPADRSGQGGGGTDISVS) are Vesicular-facing. The tract at residues 13–35 (CQKALHIITELCFAGQVEWDKCS) is cysteine motif. A helical transmembrane segment spans residues 56-76 (LLAVVVSFCGLALLVVSLFVF). The Cytoplasmic portion of the chain corresponds to 77–523 (WKLCWPCWKS…CSSPRPPSTP (447 aa)). Position 136 is a phosphothreonine (threonine 136). C2 domains follow at residues 231–352 (TCGK…TVWK) and 363–496 (DLGE…THWH). 11 residues coordinate Ca(2+): aspartate 262, aspartate 268, aspartate 320, phenylalanine 321, aspartate 322, serine 325, aspartate 328, aspartate 394, aspartate 400, aspartate 454, and aspartate 456.

Belongs to the synaptotagmin family. Homodimer; disulfide-linked via the cysteine motif. Can also form heterodimers with SYT3, SYT6, SYT7 and SYT9. The cofactor is Ca(2+).

Its subcellular location is the cytoplasmic vesicle. It localises to the secretory vesicle membrane. Its function is as follows. Ca(2+) sensor specifically required for the Ca(2+)-dependent exocytosis of secretory vesicles containing IGF1 in neurons of the olfactory bulb. Exocytosis of IGF1 is required for sensory perception of smell. Not involved in Ca(2+)-dependent synaptic vesicle exocytosis. Acts through Ca(2+) and phospholipid binding to the C2 domain: Ca(2+) induces binding of the C2-domains to phospholipid membranes and to assembled SNARE-complexes; both actions contribute to triggering exocytosis. In Rattus norvegicus (Rat), this protein is Synaptotagmin-10 (Syt10).